The primary structure comprises 217 residues: 3,4-dihydroxy-2-butanone 4-phosphate synthase (217 aa).

Residues 37–38 (RE), D42, 150–154 (RRGHT), and E174 contribute to the D-ribulose 5-phosphate site. E38 provides a ligand contact to Mg(2+). Position 153 (H153) interacts with Mg(2+).

It belongs to the DHBP synthase family. In terms of assembly, homodimer. Mg(2+) serves as cofactor. The cofactor is Mn(2+).

The enzyme catalyses D-ribulose 5-phosphate = (2S)-2-hydroxy-3-oxobutyl phosphate + formate + H(+). It participates in cofactor biosynthesis; riboflavin biosynthesis; 2-hydroxy-3-oxobutyl phosphate from D-ribulose 5-phosphate: step 1/1. In terms of biological role, catalyzes the conversion of D-ribulose 5-phosphate to formate and 3,4-dihydroxy-2-butanone 4-phosphate. The polypeptide is 3,4-dihydroxy-2-butanone 4-phosphate synthase (Shewanella baltica (strain OS155 / ATCC BAA-1091)).